The following is a 312-amino-acid chain: Gamma-soluble NSF attachment protein (312 aa).

Positions 281–312 (KKKSPATPQAKPDGAAGMAAEEEEDEYSGGLC) are disordered. A Phosphoserine modification is found at S284. Position 287 is a phosphothreonine (T287). Acidic residues predominate over residues 300-312 (AEEEEDEYSGGLC). Phosphoserine is present on S308.

This sequence belongs to the SNAP family. As to quaternary structure, interacts with RAB11FIP5. Interacts with VTI1A. In terms of tissue distribution, abundantly expressed in the heart, liver and kidneys with lower expression in the brain, spleen, lung, muscle and testes.

It localises to the membrane. The protein resides in the golgi apparatus. In terms of biological role, required for vesicular transport between the endoplasmic reticulum and the Golgi apparatus. The chain is Gamma-soluble NSF attachment protein from Mus musculus (Mouse).